A 672-amino-acid polypeptide reads, in one-letter code: DNA ligase (672 aa).

NAD(+) contacts are provided by residues 35-39, 84-85, and Glu-116; these read DAEYD and SL. Lys-118 (N6-AMP-lysine intermediate) is an active-site residue. NAD(+) is bound by residues Arg-139, Glu-179, Lys-295, and Lys-319. 4 residues coordinate Zn(2+): Cys-413, Cys-416, Cys-431, and Cys-436. The region spanning 593–672 is the BRCT domain; it reads PRSAPLTGKT…EEFLRLAGKI (80 aa).

The protein belongs to the NAD-dependent DNA ligase family. LigA subfamily. It depends on Mg(2+) as a cofactor. Mn(2+) is required as a cofactor.

The catalysed reaction is NAD(+) + (deoxyribonucleotide)n-3'-hydroxyl + 5'-phospho-(deoxyribonucleotide)m = (deoxyribonucleotide)n+m + AMP + beta-nicotinamide D-nucleotide.. Functionally, DNA ligase that catalyzes the formation of phosphodiester linkages between 5'-phosphoryl and 3'-hydroxyl groups in double-stranded DNA using NAD as a coenzyme and as the energy source for the reaction. It is essential for DNA replication and repair of damaged DNA. The sequence is that of DNA ligase from Syntrophus aciditrophicus (strain SB).